Reading from the N-terminus, the 3014-residue chain is Genome polyprotein (3014 aa).

N-acetylserine; by host is present on S2. The interval 2-23 (STNPKPQRKTKRNTNRRPQDVK) is interaction with STAT1. Positions 2–58 (STNPKPQRKTKRNTNRRPQDVKFPGGGQIVGGVYLLPRRGPRLGVRATRKTSERSQP) are interaction with EIF2AK2/PKR. The interval 2–59 (STNPKPQRKTKRNTNRRPQDVKFPGGGQIVGGVYLLPRRGPRLGVRATRKTSERSQPR) is interaction with DDX3X. The interval 2 to 75 (STNPKPQRKT…PKARQPTGRS (74 aa)) is disordered. Over 2–168 (STNPKPQRKT…EDGVNYATGN (167 aa)) the chain is Cytoplasmic. 2 consecutive short sequence motifs (nuclear localization signal) follow at residues 5–13 (PKPQRKTKR) and 38–43 (PRRGPR). Residues 7–16 (PQRKTKRNTN) are compositionally biased toward basic residues. The span at 32 to 47 (GGVYLLPRRGPRLGVR) shows a compositional bias: low complexity. The residue at position 53 (S53) is a Phosphoserine; by host. 2 consecutive short sequence motifs (nuclear localization signal) follow at residues 58–64 (PRGRRQP) and 66–71 (PKARQP). S99 and S116 each carry phosphoserine; by host. The interval 112-152 (PRRKSRNLGKVIDTLTCGFADLMGYIPLVGGPVGGVARALA) is important for endoplasmic reticulum and mitochondrial localization. An interaction with APOA2 region spans residues 122–173 (VIDTLTCGFADLMGYIPLVGGPVGGVARALAHGVRVLEDGVNYATGNLPGCS). An important for lipid droplets localization region spans residues 164–167 (YATG). Residues 169 to 189 (LPGCSFSIFILALLSCLTVPT) form a helical membrane-spanning segment. Residues 178–191 (ILALLSCLTVPTSA) constitute a propeptide, ER anchor for the core protein, removed in mature form by host signal peptidase. Residues 190–358 (SAVPYRNASG…AGAHWGVLFA (169 aa)) lie on the Lumenal side of the membrane. N-linked (GlcNAc...) asparagine; by host glycosylation is found at N196, N209, and N234. Residues 265 to 296 (LAGGAALCSALYVGDACGAVFLVGQMFTYSPR) are important for fusion. A glycan (N-linked (GlcNAc...) asparagine; by host) is linked at N305. A helical transmembrane segment spans residues 359 to 379 (AAYYASAANWAKVVLVLFLFA). The Lumenal segment spans residues 380 to 726 (GVDANTRTVG…WEYIVLAFLL (347 aa)). Positions 385–412 (TRTVGGSAAQGARGLASLFTPGPQQNLQ) are HVR1. N-linked (GlcNAc...) (high mannose) asparagine; by host glycosylation is found at N417, N423, and N430. 4 disulfides stabilise this stretch: C429/C553, C452/C459, C487/C495, and C504/C509. N-linked (GlcNAc...) asparagine; by host glycosylation occurs at N448. An HVR2 region spans residues 475–479 (AAVSG). Positions 481-494 (SDDKPYCWHYPPRP) are CD81-binding 1. A glycan (N-linked (GlcNAc...) asparagine; by host) is linked at N533. The segment at 545–552 (PPTGNWFG) is CD81-binding 2. N-linked (GlcNAc...) asparagine; by host glycosylation occurs at N557. C565 and C570 are joined by a disulfide. N-linked (GlcNAc...) asparagine; by host glycosylation is present at N578. Cystine bridges form between C582–C586, C598–C621, and C608–C645. N-linked (GlcNAc...) (high mannose) asparagine; by host glycans are attached at residues N624 and N646. Cysteines 653 and 678 form a disulfide. Residues 661–672 (AELSPLLHTTTQ) form a PKR/eIF2-alpha phosphorylation homology domain (PePHD) region. The chain crosses the membrane as a helical span at residues 727–747 (LADARICTCLWIMLLVCQAEA). Residues 748 to 758 (ALENVIVLNAA) lie on the Lumenal side of the membrane. The chain crosses the membrane as a helical span at residues 759-779 (AAAGTHGFFWGLLVICFAWHF). At 780-783 (KGRL) the chain is on the cytoplasmic side. Residues 784–804 (VPGATYLCLGIWPLLLLLFLL) traverse the membrane as a helical segment. Residues 805 to 814 (PQRALALDSS) lie on the Lumenal side of the membrane. A helical transmembrane segment spans residues 815-835 (DGGTVGCLVLTILTIFTLTPG). Topologically, residues 836–882 (YKKMVVLVIWWLQYFIARVEAFIHVWVPPLQVRGGRDAIIMLTCLFH) are cytoplasmic. The chain crosses the membrane as a helical span at residues 883-903 (PALGFEVTKILLGILGPLYLL). Residues 904–929 (QYSLIKLPYFIRARALLRACLLAKHL) lie on the Lumenal side of the membrane. A Peptidase C18 domain is found at 904–1027 (QYSLIKLPYF…DIREAGWRLL (124 aa)). A protease NS2-3 region spans residues 905-1207 (YSLIKLPYFI…PVENLETTMR (303 aa)). C923 carries the S-palmitoyl cysteine; by host lipid modification. Residues 930-950 (ACGRYVQAALLHLGRLTGTYI) traverse the membrane as a helical segment. Residues 930 to 950 (ACGRYVQAALLHLGRLTGTYI) form an interaction with host SCPS1 region. Residues 951–1658 (YDHLAPMKDW…CMSADLEVIT (708 aa)) are Cytoplasmic-facing. Catalysis depends on for protease NS2 activity; shared with dimeric partner residues H953, E973, and C994. The Peptidase S29 domain maps to 1028 to 1209 (APITAYAQQT…ENLETTMRSP (182 aa)). Catalysis depends on charge relay system; for serine protease NS3 activity residues H1084 and D1108. Positions 1124 and 1126 each coordinate Zn(2+). The Charge relay system; for serine protease NS3 activity role is filled by S1166. Zn(2+) contacts are provided by C1172 and H1176. A Helicase ATP-binding domain is found at 1218-1370 (PAVPHEFQVG…PNIEEVALPS (153 aa)). 1231-1238 (APTGSGKS) lines the ATP pocket. Mg(2+) is bound by residues S1238 and E1318. The short motif at 1317–1320 (DECH) is the DECH box element. The tract at residues 1487–1499 (QRRGRTGRGRHGI) is RNA-binding. Residues 1659–1679 (STWVLVGGVVAALAAYCLTVG) traverse the membrane as a helical segment. An NS3-binding region spans residues 1680 to 1691 (SVAIVGRIILSG). The Cytoplasmic segment spans residues 1680–1806 (SVAIVGRIIL…AVTSPLTTQQ (127 aa)). Residues 1807 to 1827 (TLLFNILGGWVASQIAPPTAA) form a helical membrane-spanning segment. Residues 1828–1829 (TA) are Lumenal-facing. The chain crosses the membrane as a helical span at residues 1830 to 1850 (FVVSGMAGAAVGSIGLGRVLI). Position 1851 (D1851) is a topological domain, cytoplasmic. Residues 1852–1872 (ILAGYGAGVAGALVAFKIMCG) form a helical membrane-spanning segment. Topologically, residues 1873 to 1882 (EKPTAEDLVN) are lumenal. The helical transmembrane segment at 1883–1903 (LLPSILCPGALVVGVICAAVL) threads the bilayer. Topologically, residues 1904–1973 (RRHIGPGEGA…WIGEDYSTPC (70 aa)) are cytoplasmic. The S-palmitoyl cysteine; by host moiety is linked to residue C1973. An intramembrane segment occupies 1974–2003 (DGTWLRAIWDWVCTALTDFKAWLQAKLLPQ). The Cytoplasmic portion of the chain corresponds to 2004–2993 (LPGVPFLSCQ…YHSMSRARPR (990 aa)). Positions 2012, 2030, 2032, and 2053 each coordinate Zn(2+). The FKBP8-binding stretch occupies residues 2121–2209 (EFFTELDGVR…ASSSASQLSA (89 aa)). The interval 2121-2334 (EFFTELDGVR…VPPPRRKRKP (214 aa)) is transcriptional activation. Positions 2136-2140 (PPCNP) are interaction with non-structural protein 4A. Disordered stretches follow at residues 2187–2219 (AKRRLDRGSPPSLASSSASQLSAPSLKATCTTQ), 2301–2337 (TWKQPDYDPPQVSGCPLPPAGLPPVPPPRRKRKPVVL), and 2358–2413 (TQSI…SWST). The interaction with host SKP2 stretch occupies residues 2190–2441 (RLDRGSPPSL…ALITPCSAEE (252 aa)). Phosphoserine; by host occurs at positions 2195, 2198, 2202, 2205, 2208, and 2211. Low complexity predominate over residues 2195 to 2212 (SPPSLASSSASQLSAPSL). An ISDR region spans residues 2211-2250 (SLKATCTTQGHHPDADLIEANLLWRQCMGGNITRVEAENK). An interaction with EIF2AK2/PKR region spans residues 2211-2276 (SLKATCTTQG…REISVSADCF (66 aa)). Positions 2250–2307 (KVVILDSFEPLKADDDDREISVSADCFRRGPAFPPALPIWARPGYDPPLLETWKQPDY) are NS4B-binding. The V3 stretch occupies residues 2300-2378 (ETWKQPDYDP…GTSSQPDSGP (79 aa)). Residues 2316–2327 (PLPPAGLPPVPP) are compositionally biased toward pro residues. The SH3-binding motif lies at 2323 to 2326 (PPVP). Residues 2328–2337 (PRRKRKPVVL) carry the Nuclear localization signal motif. Residues 2358–2375 (TQSIEGQDSAVGTSSQPD) show a composition bias toward polar residues. Residue S2465 is modified to Phosphoserine; by host. The RdRp catalytic domain occupies 2637-2755 (PMAFSYDTRC…ICESQGTHED (119 aa)). Residues D2643, D2741, and D2742 each coordinate Mg(2+). A helical transmembrane segment spans residues 2994–3014 (CILLCLLLLTVGVGIFLLPAR).

This sequence belongs to the hepacivirus polyprotein family. Homooligomer. Interacts with E1 (via C-terminus). Interacts with the non-structural protein 5A. Interacts (via N-terminus) with host STAT1 (via SH2 domain); this interaction results in decreased STAT1 phosphorylation and ubiquitin-mediated proteasome-dependent STAT1 degradation, leading to decreased IFN-stimulated gene transcription. Interacts with host STAT3; this interaction constitutively activates STAT3. Interacts with host LTBR receptor. Interacts with host TNFRSF1A receptor and possibly induces apoptosis. Interacts with host HNRPK. Interacts with host YWHAE. Interacts with host UBE3A/E6AP. Interacts with host DDX3X. Interacts with host APOA2. Interacts with host RXRA protein. Interacts with host SP110 isoform 3/Sp110b; this interaction sequesters the transcriptional corepressor SP110 away from the nucleus. Interacts with host CREB3 nuclear transcription protein; this interaction triggers cell transformation. Interacts with host ACY3. Interacts with host C1QR1. Interacts with host RBM24; this interaction, which enhances the interaction of the mature core protein with 5'-UTR, may inhibit viral translation and favor replication. Interacts with host EIF2AK2/PKR; this interaction induces the autophosphorylation of EIF2AK2. Part of the viral assembly initiation complex composed of NS2, E1, E2, NS3, NS4A, NS5A and the mature core protein. As to quaternary structure, forms a heterodimer with envelope glycoprotein E2. Interacts with mature core protein. Interacts with protease NS2. The heterodimer E1/E2 interacts with host CLDN1; this interaction plays a role in viral entry into host cell. Interacts with host SPSB2 (via C-terminus). Part of the viral assembly initiation complex composed of NS2, E1, E2, NS3, NS4A, NS5A and the mature core protein. Interacts with host NEURL3; this interaction prevents E1 binding to glycoprotein E2. In terms of assembly, forms a heterodimer with envelope glycoprotein E1. Interacts with host CD81 and SCARB1 receptors; these interactions play a role in viral entry into host cell. Interacts with host EIF2AK2/PKR; this interaction inhibits EIF2AK2 and probably allows the virus to evade the innate immune response. Interacts with host CD209/DC-SIGN and CLEC4M/DC-SIGNR. Interact with host SPCS1; this interaction is essential for viral particle assembly. Interacts with protease NS2. The heterodimer E1/E2 interacts with host CLDN1; this interaction plays a role in viral entry into host cell. Part of the viral assembly initiation complex composed of NS2, E1, E2, NS3, NS4A, NS5A and the mature core protein. Interacts with host SLC3A2/4F2hc; the interaction may facilitate viral entry into host cell. Interacts with human PLSCR1. Homohexamer. Homoheptamer. Interacts with protease NS2. As to quaternary structure, homodimer. Interacts with host SPCS1; this interaction is essential for viral particle assembly. Interacts with envelope glycoprotein E1. Interacts with envelope glycoprotein E2. Interacts with viroporin p7. Interacts with serine protease/helicase NS3. Part of the replication complex composed of NS2, NS3, NS4A, NS4B, NS5A and the RNA-directed RNA polymerase embedded in an ER-derived membranous web. Part of the viral assembly initiation complex composed of NS2, E1, E2, NS3, NS4A, NS5A and the mature core protein. In terms of assembly, interacts with protease NS2. Interacts with non-structural protein 4A; this interaction stabilizes the folding of NS3 serine protease. NS3-NS4A interaction is essential for NS3 activation and allows membrane anchorage of the latter. NS3/NS4A complex also prevents phosphorylation of host IRF3, thus preventing the establishment of dsRNA induced antiviral state. Interacts with host MAVS; this interaction leads to the cleavage and inhibition of host MAVS. Interacts with host TICAM1; this interaction leads to the cleavage and inhibition of host TICAM1. Interacts with host TANK-binding kinase/TBK1; this interaction results in the inhibition of the association between TBK1 and IRF3, which leads to the inhibition of IRF3 activation. Interacts with host RBM24. Part of the replication complex composed of NS2, NS3, NS4A, NS4B, NS5A and the RNA-directed RNA polymerase embedded in an ER-derived membranous web. Part of the viral assembly initiation complex composed of NS2, E1, E2, NS3, NS4A, NS5A and the mature core protein. Interacts with NS3 serine protease; this interaction stabilizes the folding of NS3 serine protease. NS3-NS4A interaction is essential for NS3 activation and allows membrane anchorage of the latter. Interacts with non-structural protein 5A (via N-terminus). Part of the replication complex composed of NS2, NS3, NS4A, NS4B, NS5A and the RNA-directed RNA polymerase embedded in an ER-derived membranous web. Part of the viral assembly initiation complex composed of NS2, E1, E2, NS3, NS4A, NS5A and the mature core protein. As to quaternary structure, homomultimer. Interacts with non-structural protein NS5A. Interacts with host PLA2G4C; this interaction likely initiates the recruitment of replication complexes to lipid droplets. Interacts with host STING; this interaction disrupts the interaction between STING and TBK1 thereby suppressing the interferon signaling. Part of the replication complex composed of NS2, NS3, NS4A, NS4B, NS5A and the RNA-directed RNA polymerase embedded in an ER-derived membranous web. In terms of assembly, monomer. Homodimer; dimerization is required for RNA-binding. Interacts with the mature core protein. Interacts (via N-terminus) with non-structural protein 4A. Interacts with non-structural protein 4B. Interacts (via region D2) with RNA-directed RNA polymerase. Part of the viral assembly initiation complex composed of NS2, E1, E2, NS3, NS4A, NS5A and the mature core protein. Part of the replication complex composed of NS2, NS3, NS4A, NS4B, NS5A and the RNA-directed RNA polymerase embedded in an ER-derived membranous web. Interacts with host GRB2. Interacts with host BIN1. Interacts with host PIK3R1. Interacts with host SRCAP. Interacts with host FKBP8. Interacts (via C-terminus) with host VAPB (via MSP domain). Interacts with host EIF2AK2/PKR; this interaction leads to disruption of EIF2AK2 dimerization by NS5A and probably allows the virus to evade the innate immune response. Interacts (via N-terminus) with host PACSIN2 (via N-terminus); this interaction attenuates protein kinase C alpha-mediated phosphorylation of PACSIN2 by disrupting the interaction between PACSIN2 and PRKCA. Interacts (via N-terminus) with host SRC kinase (via SH2 domain). Interacts with most Src-family kinases. Interacts with host IFI27 and SKP2; promotes the ubiquitin-mediated proteasomal degradation of NS5A. Interacts with host GPS2. Interacts with host TNFRSF21; this interaction allows the modulation by the virus of JNK, p38 MAPK, STAT3, and Akt signaling pathways in a DR6-dependent manner. Interacts (via N-terminus) with host CIDEB (via N-terminus); this interaction seems to regulate the association of HCV particles with APOE. Interacts with host CHKA/Choline Kinase-alpha; CHKA bridges host PI4KA and NS5A and potentiates NS5A-stimulated PI4KA activity, which then facilitates the targeting of the ternary complex to the ER for viral replication. Interacts with host SPSB2 (via C-terminus); this interaction targets NS5A for ubiquitination and degradation. Interacts with host RAB18; this interaction may promote the association of NS5A and other replicase components with lipid droplets. Interacts (via region D2) with host PPIA/CYPA; the interaction stimulates RNA-binding ability of NS5A and is dependent on the peptidyl-prolyl cis-trans isomerase activity of PPIA/CYPA. Interacts with host TRIM14; this interaction induces the degradation of NS5A. Homooligomer. Interacts with non-structural protein 5A. Interacts with host VAPB. Interacts with host PRK2/PKN2. Interacts with host HNRNPA1 and SEPT6; these interactions facilitate viral replication. Part of the replication complex composed of NS2, NS3, NS4A, NS4B, NS5A and the RNA-directed RNA polymerase. It depends on Zn(2+) as a cofactor. Mg(2+) serves as cofactor. Post-translationally, specific enzymatic cleavages in vivo yield mature proteins. The structural proteins, core, E1, E2 and p7 are produced by proteolytic processing by host signal peptidases. The core protein precursor is synthesized as a 23 kDa, which is retained in the ER membrane through the hydrophobic signal peptide. Cleavage by the signal peptidase releases the 21 kDa mature core protein. The cleavage of the core protein precursor occurs between aminoacids 176 and 188 but the exact cleavage site is not known. Some degraded forms of the core protein appear as well during the course of infection. The other proteins (p7, NS2, NS3, NS4A, NS4B, NS5A and NS5B) are cleaved by the viral proteases. Autoprocessing between NS2 and NS3 is mediated by the NS2 cysteine protease catalytic domain and regulated by the NS3 N-terminal domain. In terms of processing, phosphorylated by host PKC and PKA. Ubiquitinated; mediated by UBE3A and leading to core protein subsequent proteasomal degradation. Post-translationally, highly N-glycosylated. In terms of processing, palmitoylation is required for NS2/3 autoprocessing and E2 recruitment to membranes. Palmitoylated. This modification may play a role in its polymerization or in protein-protein interactions. Post-translationally, phosphorylated on serines in a basal form termed p56. p58 is a hyperphosphorylated form of p56. p56 and p58 coexist in the cell in roughly equivalent amounts. Hyperphosphorylation is dependent on the presence of NS4A. Host CSNK1A1/CKI-alpha or RPS6KB1 kinases may be responsible for NS5A phosphorylation. In terms of processing, tyrosine phosphorylation is essential for the interaction with host SRC. The N-terminus is phosphorylated by host PRK2/PKN2.

Its subcellular location is the host endoplasmic reticulum membrane. The protein resides in the host mitochondrion membrane. The protein localises to the virion. It localises to the host cytoplasm. It is found in the host nucleus. Its subcellular location is the host lipid droplet. The protein resides in the virion membrane. The protein localises to the host mitochondrion. It localises to the host cell membrane. It is found in the host perinuclear region. It carries out the reaction Hydrolysis of four peptide bonds in the viral precursor polyprotein, commonly with Asp or Glu in the P6 position, Cys or Thr in P1 and Ser or Ala in P1'.. The enzyme catalyses a ribonucleoside 5'-triphosphate + H2O = a ribonucleoside 5'-diphosphate + phosphate + H(+). It catalyses the reaction ATP + H2O = ADP + phosphate + H(+). The catalysed reaction is RNA(n) + a ribonucleoside 5'-triphosphate = RNA(n+1) + diphosphate. Its activity is regulated as follows. Inhibited by the antiviral drug hexamethylene amiloride. Inhibition by amantadine appears to be genotype-dependent. Also inhibited by long-alkyl-chain iminosugar derivatives. Activity is up-regulated by PRK2/PKN2-mediated phosphorylation. In terms of biological role, packages viral RNA to form a viral nucleocapsid, and promotes virion budding. Participates in the viral particle production as a result of its interaction with the non-structural protein 5A. Binds RNA and may function as a RNA chaperone to induce the RNA structural rearrangements taking place during virus replication. Modulates viral translation initiation by interacting with viral IRES and 40S ribosomal subunit. Affects various cell signaling pathways, host immunity and lipid metabolism. Prevents the establishment of cellular antiviral state by blocking the interferon-alpha/beta (IFN-alpha/beta) and IFN-gamma signaling pathways and by blocking the formation of phosphorylated STAT1 and promoting ubiquitin-mediated proteasome-dependent degradation of STAT1. Activates STAT3 leading to cellular transformation. Regulates the activity of cellular genes, including c-myc and c-fos. May repress the promoter of p53, and sequester CREB3 and SP110 isoform 3/Sp110b in the cytoplasm. Represses cell cycle negative regulating factor CDKN1A, thereby interrupting an important check point of normal cell cycle regulation. Targets transcription factors involved in the regulation of inflammatory responses and in the immune response: suppresses TNF-induced NF-kappa-B activation, and activates AP-1. Binds to dendritic cells (DCs) via C1QR1, resulting in down-regulation of T-lymphocytes proliferation. Alters lipid metabolism by interacting with hepatocellular proteins involved in lipid accumulation and storage. Induces up-regulation of FAS promoter activity, and thereby contributes to the increased triglyceride accumulation in hepatocytes (steatosis). Its function is as follows. Forms a heterodimer with envelope glycoprotein E2, which mediates virus attachment to the host cell, virion internalization through clathrin-dependent endocytosis and fusion with host membrane. Fusion with the host cell is most likely mediated by both E1 and E2, through conformational rearrangements of the heterodimer required for fusion rather than a classical class II fusion mechanism. E1/E2 heterodimer binds host apolipoproteins such as APOB and ApoE thereby forming a lipo-viro-particle (LVP). APOE associated to the LVP allows the initial virus attachment to cell surface receptors such as the heparan sulfate proteoglycans (HSPGs), syndecan-1 (SDC1), syndecan-1 (SDC2), the low-density lipoprotein receptor (LDLR) and scavenger receptor class B type I (SCARB1). The cholesterol transfer activity of SCARB1 allows E2 exposure and binding of E2 to SCARB1 and the tetraspanin CD81. E1/E2 heterodimer binding on CD81 activates the epithelial growth factor receptor (EGFR) signaling pathway. Diffusion of the complex E1-E2-EGFR-SCARB1-CD81 to the cell lateral membrane allows further interaction with Claudin 1 (CLDN1) and occludin (OCLN) to finally trigger HCV entry. Forms a heterodimer with envelope glycoprotein E1, which mediates virus attachment to the host cell, virion internalization through clathrin-dependent endocytosis and fusion with host membrane. Fusion with the host cell is most likely mediated by both E1 and E2, through conformational rearrangements of the heterodimer required for fusion rather than a classical class II fusion mechanism. The interaction between envelope glycoprotein E2 and host apolipoprotein E/APOE allows the proper assembly, maturation and infectivity of the viral particles. This interaction is probably promoted via the up-regulation of cellular autophagy by the virus. E1/E2 heterodimer binds host apolipoproteins such as APOB and APOE thereby forming a lipo-viro-particle (LVP). APOE associated to the LVP allows the initial virus attachment to cell surface receptors such as the heparan sulfate proteoglycans (HSPGs), syndecan-1 (SDC1), syndecan-1 (SDC2), the low-density lipoprotein receptor (LDLR) and scavenger receptor class B type I (SCARB1). The cholesterol transfer activity of SCARB1 allows E2 exposure and binding of E2 to SCARB1 and the tetraspanin CD81. E1/E2 heterodimer binding on CD81 activates the epithelial growth factor receptor (EGFR) signaling pathway. Diffusion of the complex E1-E2-EGFR-SCARB1-CD81 to the cell lateral membrane allows further interaction with Claudin 1 (CLDN1) and occludin (OCLN) to finally trigger HCV entry. Inhibits host EIF2AK2/PKR activation, preventing the establishment of an antiviral state. Viral ligand for CD209/DC-SIGN and CLEC4M/DC-SIGNR, which are respectively found on dendritic cells (DCs), and on liver sinusoidal endothelial cells and macrophage-like cells of lymph node sinuses. These interactions allow the capture of circulating HCV particles by these cells and subsequent facilitated transmission to permissive cells such as hepatocytes and lymphocyte subpopulations. The interaction between E2 and host amino acid transporter complex formed by SLC3A2 and SLC7A5/LAT1 may facilitate viral entry into host cell. Functionally, ion channel protein that acts as a viroporin and plays an essential role in the assembly, envelopment and secretion of viral particles. Regulates the host cell secretory pathway, which induces the intracellular retention of viral glycoproteins and favors assembly of viral particles. Creates a pore in acidic organelles and releases Ca(2+) and H(+) in the cytoplasm of infected cells, leading to a productive viral infection. High levels of cytoplasmic Ca(2+) may trigger membrane trafficking and transport of viral ER-associated proteins to viroplasms, sites of viral genome replication. This ionic imbalance induces the assembly of the inflammasome complex, which triggers the maturation of pro-IL-1beta into IL-1beta through the action of caspase-1. Targets also host mitochondria and induces mitochondrial depolarization. In addition of its role as a viroporin, acts as a lipid raft adhesion factor. In terms of biological role, cysteine protease required for the proteolytic auto-cleavage between the non-structural proteins NS2 and NS3. The N-terminus of NS3 is required for the function of NS2 protease (active region NS2-3). Promotes the initiation of viral particle assembly by mediating the interaction between structural and non-structural proteins. Its function is as follows. Displays three enzymatic activities: serine protease with a chymotrypsin-like fold, NTPase and RNA helicase. NS3 serine protease, in association with NS4A, is responsible for the cleavages of NS3-NS4A, NS4A-NS4B, NS4B-NS5A and NS5A-NS5B. The NS3/NS4A complex prevents phosphorylation of host IRF3, thus preventing the establishment of dsRNA induced antiviral state. The NS3/NS4A complex induces host amino acid transporter component SLC3A2, thus contributing to HCV propagation. NS3 RNA helicase binds to RNA and unwinds both dsDNA and dsRNA in the 3' to 5' direction, and likely resolves RNA complicated stable secondary structures in the template strand. Binds a single ATP and catalyzes the unzipping of a single base pair of dsRNA. Inhibits host antiviral proteins TBK1 and IRF3 thereby preventing the establishment of an antiviral state. Cleaves host MAVS/CARDIF thereby preventing the establishment of an antiviral state. Cleaves host TICAM1/TRIF, thereby disrupting TLR3 signaling and preventing the establishment of an antiviral state. Peptide cofactor which forms a non-covalent complex with the N-terminal of NS3 serine protease. The NS3/NS4A complex prevents phosphorylation of host IRF3, thus preventing the establishment of dsRNA induced antiviral state. The NS3/NS4A complex induces host amino acid transporter component SLC3A2, thus contributing to HCV propagation. Functionally, induces a specific membrane alteration that serves as a scaffold for the virus replication complex. This membrane alteration gives rise to the so-called ER-derived membranous web that contains the replication complex. NS4B self-interaction contributes to its function in membranous web formation. Promotes host TRIF protein degradation in a CASP8-dependent manner thereby inhibiting host TLR3-mediated interferon signaling. Disrupts the interaction between STING and TBK1 contributing to the inhibition of interferon signaling. In terms of biological role, phosphorylated protein that is indispensable for viral replication and assembly. Both hypo- and hyperphosphorylated states are required for the viral life cycle. The hyperphosphorylated form of NS5A is an inhibitor of viral replication. Involved in RNA-binding and especially in binding to the viral genome. Zinc is essential for RNA-binding. Participates in the viral particle production as a result of its interaction with the mature viral core protein. Its interaction with host VAPB may target the viral replication complex to vesicles. Down-regulates viral IRES translation initiation. Mediates interferon resistance, presumably by interacting with and inhibiting host EIF2AK2/PKR. Prevents BIN1-induced apoptosis. Acts as a transcriptional activator of some host genes important for viral replication when localized in the nucleus. Via the interaction with host PACSIN2, modulates lipid droplet formation in order to promote virion assembly. Modulates TNFRSF21/DR6 signaling pathway for viral propagation. Its function is as follows. RNA-dependent RNA polymerase that performs primer-template recognition and RNA synthesis during viral replication. Initiates RNA transcription/replication at a flavin adenine dinucleotide (FAD), resulting in a 5'- FAD cap on viral RNAs. In this way, recognition of viral 5' RNA by host pattern recognition receptors can be bypassed, thereby evading activation of antiviral pathways. This Hepatitis C virus genotype 5a (isolate SA13) (HCV) protein is Genome polyprotein.